We begin with the raw amino-acid sequence, 322 residues long: Replication factor C small subunit 2 (322 aa).

Residue 44-51 (GPPGTGKT) participates in ATP binding.

It belongs to the activator 1 small subunits family. RfcS subfamily. In terms of assembly, heteromultimer composed of small subunits (RfcS) and large subunits (RfcL).

Functionally, part of the RFC clamp loader complex which loads the PCNA sliding clamp onto DNA. The polypeptide is Replication factor C small subunit 2 (Pyrobaculum arsenaticum (strain DSM 13514 / JCM 11321 / PZ6)).